The sequence spans 432 residues: Glutamyl-tRNA reductase (432 aa).

Residues 50–53, Ser110, 115–117, and Gln121 contribute to the substrate site; these read TCNR and ETQ. Residue Cys51 is the Nucleophile of the active site. 190 to 195 contributes to the NADP(+) binding site; sequence GAGEMG.

The protein belongs to the glutamyl-tRNA reductase family. Homodimer.

The catalysed reaction is (S)-4-amino-5-oxopentanoate + tRNA(Glu) + NADP(+) = L-glutamyl-tRNA(Glu) + NADPH + H(+). It functions in the pathway porphyrin-containing compound metabolism; protoporphyrin-IX biosynthesis; 5-aminolevulinate from L-glutamyl-tRNA(Glu): step 1/2. Its function is as follows. Catalyzes the NADPH-dependent reduction of glutamyl-tRNA(Glu) to glutamate 1-semialdehyde (GSA). In Nitratiruptor sp. (strain SB155-2), this protein is Glutamyl-tRNA reductase.